We begin with the raw amino-acid sequence, 628 residues long: tRNA uridine 5-carboxymethylaminomethyl modification enzyme MnmG (628 aa).

Residue 14–19 participates in FAD binding; the sequence is GAGHAG. Residue 274-288 coordinates NAD(+); it reads GPRYCPSIEDKIVRF.

The protein belongs to the MnmG family. As to quaternary structure, homodimer. Heterotetramer of two MnmE and two MnmG subunits. Requires FAD as cofactor.

It localises to the cytoplasm. NAD-binding protein involved in the addition of a carboxymethylaminomethyl (cmnm) group at the wobble position (U34) of certain tRNAs, forming tRNA-cmnm(5)s(2)U34. The chain is tRNA uridine 5-carboxymethylaminomethyl modification enzyme MnmG from Clostridium kluyveri (strain ATCC 8527 / DSM 555 / NBRC 12016 / NCIMB 10680 / K1).